A 366-amino-acid polypeptide reads, in one-letter code: Septin-1 (366 aa).

The Septin-type G domain occupies 22–295; the sequence is KGFDFTLMVA…EGYRARCLQS (274 aa). The interval 32–39 is G1 motif; sequence GESGLGKS. Residues 32-39, Thr66, Gly92, and 171-179 each bind GTP; these read GESGLGKS and KADALLPRE. The segment at 89–92 is G3 motif; sequence DTPG. The tract at residues 170 to 173 is G4 motif; that stretch reads GKAD. At Ser206 the chain carries Phosphoserine. GTP is bound by residues Gly229 and Arg244. Ser247 bears the Phosphoserine; by AURKB mark. Thr250 carries the phosphothreonine modification. Phosphoserine; by AURKB occurs at positions 306 and 314. The tract at residues 347–366 is disordered; it reads EKMQAQMQQSQAQGEQSDVL. Low complexity predominate over residues 349–366; it reads MQAQMQQSQAQGEQSDVL.

It belongs to the TRAFAC class TrmE-Era-EngA-EngB-Septin-like GTPase superfamily. Septin GTPase family. In terms of assembly, septins polymerize into heterooligomeric protein complexes that form filaments, and can associate with cellular membranes, actin filaments and microtubules. GTPase activity is required for filament formation. Interacts with AURKB.

The protein localises to the cytoplasm. It localises to the cytoskeleton. The protein resides in the microtubule organizing center. It is found in the centrosome. Its subcellular location is the midbody. Its function is as follows. Filament-forming cytoskeletal GTPase. May play a role in cytokinesis (Potential). The sequence is that of Septin-1 from Rattus norvegicus (Rat).